Reading from the N-terminus, the 238-residue chain is Small heat shock protein, chloroplastic (238 aa).

The disordered stretch occupies residues 31–87; that stretch reads APLSTGGRTRPLSVASAAQENRDNSVDVQVSQAQNAGNQQGNAVQRRPRRAGFDISP. Residues 58 to 75 are compositionally biased toward low complexity; sequence VQVSQAQNAGNQQGNAVQ. A sHSP domain is found at 124–238; sequence AARARRRMPW…ERKVIDVQVQ (115 aa).

The protein belongs to the small heat shock protein (HSP20) family.

The protein resides in the plastid. The protein localises to the chloroplast. In Triticum aestivum (Wheat), this protein is Small heat shock protein, chloroplastic (HSP21).